A 121-amino-acid polypeptide reads, in one-letter code: Large ribosomal subunit protein bL20 (121 aa).

Belongs to the bacterial ribosomal protein bL20 family.

Binds directly to 23S ribosomal RNA and is necessary for the in vitro assembly process of the 50S ribosomal subunit. It is not involved in the protein synthesizing functions of that subunit. In Wolbachia sp. subsp. Brugia malayi (strain TRS), this protein is Large ribosomal subunit protein bL20.